A 364-amino-acid polypeptide reads, in one-letter code: Beta-parvin (364 aa).

The tract at residues 1–57 is disordered; that stretch reads MSSAPRSPTPRPRRMKKDESFLGKLGGTLARKRRAREVSDLQEEGKNAINSPMSPAL. A Phosphoserine modification is found at Ser7. Over residues 36–46 the composition is skewed to basic and acidic residues; the sequence is REVSDLQEEGK. Ser54 is subject to Phosphoserine. Calponin-homology (CH) domains follow at residues 87–194 and 254–361; these read KELV…MHFR and SVVK…TKYK.

Belongs to the parvin family. Interacts with DYSF. Interacts with ILK, ARHGEF6, PXN (via LD motifs), ACTN2 and actin. Expressed predominantly in heart and skeletal muscle.

It is found in the cell junction. The protein localises to the focal adhesion. It localises to the cell membrane. The protein resides in the cytoplasm. Its subcellular location is the cytoskeleton. It is found in the cell projection. The protein localises to the lamellipodium. It localises to the myofibril. The protein resides in the sarcomere. Its subcellular location is the z line. In terms of biological role, adapter protein that plays a role in integrin signaling via ILK and in activation of the GTPases CDC42 and RAC1 by guanine exchange factors, such as ARHGEF6. Is involved in the reorganization of the actin cytoskeleton and formation of lamellipodia. Plays a role in cell adhesion, cell spreading, establishment or maintenance of cell polarity, and cell migration. The chain is Beta-parvin (PARVB) from Homo sapiens (Human).